We begin with the raw amino-acid sequence, 454 residues long: tRNA-2-methylthio-N(6)-dimethylallyladenosine synthase (454 aa).

The region spanning 6–122 is the MTTase N-terminal domain; it reads RRYHITTFGC…LQDLLQEVLA (117 aa). Positions 15, 51, 85, 157, 161, and 164 each coordinate [4Fe-4S] cluster. The Radical SAM core domain maps to 143–380; the sequence is RESTVTAWVN…NHLVAIKAAE (238 aa). The TRAM domain occupies 383–447; that stretch reads QRYLGRIEEV…AFSLTGEPVK (65 aa).

The protein belongs to the methylthiotransferase family. MiaB subfamily. Monomer. [4Fe-4S] cluster is required as a cofactor.

Its subcellular location is the cytoplasm. It carries out the reaction N(6)-dimethylallyladenosine(37) in tRNA + (sulfur carrier)-SH + AH2 + 2 S-adenosyl-L-methionine = 2-methylsulfanyl-N(6)-dimethylallyladenosine(37) in tRNA + (sulfur carrier)-H + 5'-deoxyadenosine + L-methionine + A + S-adenosyl-L-homocysteine + 2 H(+). Functionally, catalyzes the methylthiolation of N6-(dimethylallyl)adenosine (i(6)A), leading to the formation of 2-methylthio-N6-(dimethylallyl)adenosine (ms(2)i(6)A) at position 37 in tRNAs that read codons beginning with uridine. The chain is tRNA-2-methylthio-N(6)-dimethylallyladenosine synthase from Gloeothece citriformis (strain PCC 7424) (Cyanothece sp. (strain PCC 7424)).